Consider the following 702-residue polypeptide: MARKTPIERYRNIGISAHIDAGKTTTTERILFYTGVTHKLGEVHDGAATTDWMEQEQERGITITSAAVTCFWKGMDMSYPEHRFNIIDTPGHVDFTIEVERSMRVLDGACMVYCAVGGVQPQSETVWRQANKYKVPRLAFVNKMDRTGANFFKVVDQIKTRLKGNPVPVVVPIGAEDNFKGVVDLLKMKAIIWDEASQGMKFEYADIPAEVKETAEKWRENMVEAAAEASEELMNKYLDEGTLSEEDIKAGLRARTLAVEIQPMLCGTAFKNKGVQRMLDAVIDYLPSPVDIPDVEGTDPDDEEKKLARKADDGEKFSALAFKLMTDPFVGQLTFVRVYSGVLSKGDTVFNSVKGKKERIGRIVQMMANERIEVDEIRAGDIAACVGLKDVTTGETLSDVDNPIILERMVFPEPVIAQAVEPKSKADQEKMGIALSRLASEDPSFRVRTDEESGQTIIAGMGELHLEIIVDRMKREFNVEANVGKPQVAYRETVRKTVTDVDGKFVRQSGGKGQYGHVVFTLEPQEAGKGFEFVDEIKGGVVPREYIPAVEKGVIEALTSGVLAGYPVVDVKVRLTFGSYHDVDSSEQAFKMAAIFGFKEAARKANPVILEPMMAVEVETPEDYAGTVMGDLSSRRGMVQGMDDMVGGGKAIKAEVPLSEMFGYATQLRSMTQGRATYTMEFKHYAEAPRNVSEAIVAARAK.

The 283-residue stretch at 8 to 290 (ERYRNIGISA…AVIDYLPSPV (283 aa)) folds into the tr-type G domain. Residues 17–24 (AHIDAGKT), 88–92 (DTPGH), and 142–145 (NKMD) contribute to the GTP site.

Belongs to the TRAFAC class translation factor GTPase superfamily. Classic translation factor GTPase family. EF-G/EF-2 subfamily.

The protein localises to the cytoplasm. Functionally, catalyzes the GTP-dependent ribosomal translocation step during translation elongation. During this step, the ribosome changes from the pre-translocational (PRE) to the post-translocational (POST) state as the newly formed A-site-bound peptidyl-tRNA and P-site-bound deacylated tRNA move to the P and E sites, respectively. Catalyzes the coordinated movement of the two tRNA molecules, the mRNA and conformational changes in the ribosome. In Acidovorax ebreus (strain TPSY) (Diaphorobacter sp. (strain TPSY)), this protein is Elongation factor G.